The primary structure comprises 285 residues: Diphthine methyl ester synthase (285 aa).

S-adenosyl-L-methionine contacts are provided by residues Leu9, Asp84, Gly87, Ser112–Ile113, and Leu163. Ser171 bears the Phosphoserine mark. S-adenosyl-L-methionine-binding residues include Val225 and His250.

Belongs to the diphthine synthase family.

It carries out the reaction 2-[(3S)-amino-3-carboxypropyl]-L-histidyl-[translation elongation factor 2] + 4 S-adenosyl-L-methionine = diphthine methyl ester-[translation elongation factor 2] + 4 S-adenosyl-L-homocysteine + 3 H(+). It participates in protein modification; peptidyl-diphthamide biosynthesis. S-adenosyl-L-methionine-dependent methyltransferase that catalyzes four methylations of the modified target histidine residue in translation elongation factor 2 (EF-2), to form an intermediate called diphthine methyl ester. The four successive methylation reactions represent the second step of diphthamide biosynthesis. This Homo sapiens (Human) protein is Diphthine methyl ester synthase (DPH5).